A 404-amino-acid chain; its full sequence is Omega-3 fatty acid desaturase, chloroplastic (404 aa).

A disordered region spans residues 28–50 (TVDSSSSPPIEEEPKTQRFDPGA). The short motif at 121-125 (HDCGH) is the Histidine box-1 element. The Histidine box-2 motif lies at 157 to 161 (HRTHH). The Histidine box-3 signature appears at 324–328 (HVIHH).

It belongs to the fatty acid desaturase type 1 family.

The protein resides in the plastid. It is found in the chloroplast membrane. The protein operates within lipid metabolism; polyunsaturated fatty acid biosynthesis. Functionally, chloroplast omega-3 fatty acid desaturase introduces the third double bond in the biosynthesis of 16:3 and 18:3 fatty acids, important constituents of plant membranes. It is thought to use ferredoxin as an electron donor and to act on fatty acids esterified to galactolipids, sulfolipids and phosphatidylglycerol. This is Omega-3 fatty acid desaturase, chloroplastic (FAD7) from Brassica napus (Rape).